Here is a 1673-residue protein sequence, read N- to C-terminus: Leucine-rich repeat- and IQ domain-containing protein 1 (1673 aa).

Disordered stretches follow at residues 22-48 (ISIS…SDTD) and 189-208 (LEEK…KRTF). The LRR 1 repeat unit spans residues 34 to 59 (NDSVSDTQSDSSDTDLLELPESVLHY). Residues 216-239 (QCWMRQFEVEKKHLEDLQKQDQDK) form an LRR 2 repeat. The IQ 1 domain maps to 291-320 (RYDAAVKIQATYRASVTYRKYSPIIKEQME). Residues 324–374 (RRAQELKEKEAKIRQKEEEKRRRLEEEQRVEEEKKKKMLEERRRREREYEE) are disordered. The span at 326 to 374 (AQELKEKEAKIRQKEEEKRRRLEEEQRVEEEKKKKMLEERRRREREYEE) shows a compositional bias: basic and acidic residues. The LRR 3 repeat unit spans residues 491-516 (LPKLKINENLSKNQCSEQPSDQEFNA). Disordered stretches follow at residues 544 to 658 (ESDT…EEIP) and 679 to 702 (EGEA…GSHS). Composition is skewed to basic and acidic residues over residues 549-567 (TEEH…ETEK) and 588-602 (EETR…EIKE). Positions 603–629 (MTQQGGPSDENNSSPISMQKSLPSLTP) are enriched in polar residues. Residues 641 to 665 (LEEDQETDLKSERIEEIPEEGVLSC) form an LRR 4 repeat. Positions 647–656 (TDLKSERIEE) are enriched in basic and acidic residues. LRR repeat units follow at residues 830–852 (CSNL…LSHC), 853–873 (TRLK…CENL), 874–894 (ENLS…GFDG), 895–919 (CTNL…SLKY), 921–939 (QELT…LCEA), 940–961 (PTIV…IGNC), 962–983 (GLLQ…LRNH), 984–1005 (VLLR…LSSC), 1007–1029 (LPLL…LFHL), 1030–1054 (VSLE…WFNA), and 1067–1090 (PVLQ…VLNG). Disordered stretches follow at residues 1163-1230 (AHEQ…HCEE) and 1308-1330 (PTTT…EERR). Polar residues-rich tracts occupy residues 1168–1226 (DVNT…PSTS) and 1308–1325 (PTTT…QTTS). IQ domains follow at residues 1280–1309 (PTKA…MHPT) and 1340–1369 (REKA…AIKD). Residues 1378–1405 (EIDLEDFEFDEDALEKDWPALDSTGFPS) form an LRR 16 repeat.

In Mus musculus (Mouse), this protein is Leucine-rich repeat- and IQ domain-containing protein 1 (Lrriq1).